The chain runs to 154 residues: Fimbrial protein (154 aa).

A propeptide spans 1–6 (MNAQKG) (leader sequence). N-methylphenylalanine is present on phenylalanine 7. A helical membrane pass occupies residues 7 to 29 (FTLIELMIVIAIIGILAAIALPA).

This sequence belongs to the N-Me-Phe pilin family. As to quaternary structure, the pili are polar flexible filaments of about 5.4 nanometers diameter and 2.5 micrometers average length; they consist of only a single polypeptide chain arranged in a helical configuration of five subunits per turn in the assembled pilus.

The protein resides in the fimbrium. It is found in the membrane. The polypeptide is Fimbrial protein (tfpA) (Moraxella nonliquefaciens).